Here is a 305-residue protein sequence, read N- to C-terminus: Glycine--tRNA ligase alpha subunit (305 aa).

This sequence belongs to the class-II aminoacyl-tRNA synthetase family. As to quaternary structure, tetramer of two alpha and two beta subunits.

The protein resides in the cytoplasm. The enzyme catalyses tRNA(Gly) + glycine + ATP = glycyl-tRNA(Gly) + AMP + diphosphate. The sequence is that of Glycine--tRNA ligase alpha subunit from Streptococcus suis (strain 98HAH33).